A 558-amino-acid polypeptide reads, in one-letter code: Asparagine--tRNA ligase, cytoplasmic (558 aa).

S71 is subject to Phosphoserine. The tract at residues 79–101 (MWHREQMKSESREKKEAEDSLRR) is disordered. Over residues 81-101 (HREQMKSESREKKEAEDSLRR) the composition is skewed to basic and acidic residues. K254 and K500 each carry N6-acetyllysine.

The protein belongs to the class-II aminoacyl-tRNA synthetase family. Homodimer.

It is found in the cytoplasm. It catalyses the reaction tRNA(Asn) + L-asparagine + ATP = L-asparaginyl-tRNA(Asn) + AMP + diphosphate + H(+). Catalyzes the attachment of asparagine to tRNA(Asn) in a two-step reaction: asparagine is first activated by ATP to form Asn-AMP and then transferred to the acceptor end of tRNA(Asn). In addition to its essential role in protein synthesis, acts as a signaling molecule that induced migration of CCR3-expressing cells. Has an essential role in the development of the cerebral cortex, being required for proper proliferation of radial glial cells. This chain is Asparagine--tRNA ligase, cytoplasmic, found in Macaca fascicularis (Crab-eating macaque).